The chain runs to 263 residues: Probable 6-oxopurine nucleoside phosphorylase (263 aa).

Phosphate-binding positions include Thr9, 49 to 50, and 82 to 83; these read RH and TA. Substrate is bound at residue Met181. Thr182 is a binding site for phosphate. Substrate is bound at residue 205-207; it reads NYA.

The protein belongs to the PNP/MTAP phosphorylase family. MTAP subfamily. Homohexamer. Dimer of a homotrimer.

The catalysed reaction is a purine D-ribonucleoside + phosphate = a purine nucleobase + alpha-D-ribose 1-phosphate. It participates in purine metabolism; purine nucleoside salvage. Its function is as follows. Purine nucleoside phosphorylase which is highly specific for 6-oxopurine nucleosides. Cleaves guanosine or inosine to respective bases and sugar-1-phosphate molecules. Involved in purine salvage. This Dictyoglomus turgidum (strain DSM 6724 / Z-1310) protein is Probable 6-oxopurine nucleoside phosphorylase.